The primary structure comprises 454 residues: Exopolyphosphatase PRUNE1 (454 aa).

Met1 bears the N-acetylmethionine mark. 4 residues coordinate Mn(2+): Asp28, Asp30, Asp106, and Asp179. A DHH motif motif is present at residues 106–108 (DHH). The tract at residues 394-421 (SLISGLSQDEEDPPLPPTPMNSLVDECP) is essential for homodimerization. Residues 397 to 420 (SGLSQDEEDPPLPPTPMNSLVDEC) form a disordered region. A Phosphoserine modification is found at Ser400. Thr411 is modified (phosphothreonine). Position 415 is a phosphoserine (Ser415).

Belongs to the PPase class C family. Prune subfamily. Homooligomer. Able to homodimerize via its C-terminal domain. Interacts with NME1. Interacts with GSK3; at focal adhesion complexes where paxillin and vinculin are colocalized. Interacts with alpha and beta tubulin. Mn(2+) is required as a cofactor.

The protein resides in the cytoplasm. It localises to the nucleus. Its subcellular location is the cell junction. It is found in the focal adhesion. It catalyses the reaction diphosphate + H2O = 2 phosphate + H(+). Its activity is regulated as follows. Activated by magnesium ions and inhibited by manganese ions. Inhibited by dipyridamole, moderately sensitive to IBMX and inhibited by vinpocetine. Functionally, phosphodiesterase (PDE) that has higher activity toward cAMP than cGMP, as substrate. Plays a role in cell proliferation, migration and differentiation, and acts as a negative regulator of NME1. Plays a role in the regulation of neurogenesis. Involved in the regulation of microtubule polymerization. The chain is Exopolyphosphatase PRUNE1 (Prune1) from Mus musculus (Mouse).